The sequence spans 518 residues: UDP-N-acetylmuramate--L-alanine ligase (518 aa).

158–164 (GTHGKTT) is an ATP binding site.

This sequence belongs to the MurCDEF family.

It is found in the cytoplasm. The catalysed reaction is UDP-N-acetyl-alpha-D-muramate + L-alanine + ATP = UDP-N-acetyl-alpha-D-muramoyl-L-alanine + ADP + phosphate + H(+). The protein operates within cell wall biogenesis; peptidoglycan biosynthesis. In terms of biological role, cell wall formation. This Crocosphaera subtropica (strain ATCC 51142 / BH68) (Cyanothece sp. (strain ATCC 51142)) protein is UDP-N-acetylmuramate--L-alanine ligase.